The sequence spans 450 residues: SAGA complex/transcription factor TFIID complex subunit Taf12 (450 aa).

Polar residues-rich tracts occupy residues 1 to 10 (MNGQHSSPGT), 19 to 29 (PVNQAQFSQQR), and 190 to 212 (QNRQ…NAST). Disordered regions lie at residues 1 to 29 (MNGQ…SQQR) and 190 to 281 (QNRQ…VEKS). The segment covering 217 to 236 (STASTPQLQQTQAQANAPQQ) has biased composition (low complexity). 2 stretches are compositionally biased toward polar residues: residues 237–246 (RINPETSSVP) and 255–281 (ANVS…VEKS). Ser-297 is modified (phosphoserine). A Histone-fold domain is found at 338–413 (NGNRLLSKRK…HLERNWNIRL (76 aa)). The segment at 426-450 (RKTGPTPSYQQKQNAIGTAKSLNKD) is disordered. The span at 430 to 441 (PTPSYQQKQNAI) shows a compositional bias: polar residues.

Belongs to the TAF12 family. Component of the 1.8 MDa SAGA (Spt-Ada-Gcn5 acetyltransferase) complex, which is composed of 19 subunits tra1, spt7, taf5, ngg1/ada3, sgf73, spt20, spt8, taf12, taf6, hfi1/ada1, ubp8, gcn5, ada2, spt3, sgf29, taf10, taf9, sgf11 and sus1. The SAGA complex is composed of 4 modules, namely the HAT (histone acetyltransferase) module (gcn5, ada2, ngg1/ada3 and sgf29), the DUB (deubiquitinating) module (ubp8, sgf11, sgf73 and sus1), the core or TAF (TBP-associated factor) module (taf5, taf6, taf9, taf10 and taf12), and the Tra1 or SPT (Suppressor of Ty) module (tra1, hfi1/ada1, spt3, spt7, spt8 and spt20). The Tra1/SPT module binds activators, the core module recruits TBP (TATA-binding protein), the HAT module contains the histone H3 acetyltransferase gcn5, and the DUB module comprises the histone H2B deubiquitinase ubp8. Component of the 1.2 MDa TFIID complex, which is composed of TATA-binding protein (TBP) and the 14 TBP-associated factors (TAFs). It comprises 1 copy of each taf1, taf2, taf3, taf7, taf8, taf11, taf13, 2 copies of each taf4, taf5, taf6, taf9, taf10, taf12, and 3 copies of taf14. In TFIID, taf12 heterodimerizes with taf4, forming ultimately an octamer consisting of a taf6-taf9 heterotetramer core flanked by taf4-taf12 dimers on either side, similar to the histone H2A-H2B-H3-H4 octamer.

It localises to the nucleus. Functionally, functions as a component of both the DNA-binding general transcription initiation factor complex TFIID and the transcription coactivator SAGA complex. Binding of TFIID to a promoter (with or without TATA element) is the initial step in pre-initiation complex (PIC) formation. TFIID plays a key role in the regulation of gene expression by RNA polymerase II through different activities such as transcription activator interaction, core promoter recognition and selectivity, TFIIA and TFIIB interaction, chromatin modification (histone acetylation by TAF1), facilitation of DNA opening and initiation of transcription. SAGA acts as a general cofactor required for essentially all RNA polymerase II transcription. At the promoters, SAGA is required for transcription pre-initiation complex (PIC) recruitment. It influences RNA polymerase II transcriptional activity through different activities such as TBP interaction (via core/TAF module) and promoter selectivity, interaction with transcription activators (via Tra1/SPT module), and chromatin modification through histone acetylation (via HAT module) and deubiquitination (via DUB module). SAGA preferentially acetylates histones H3 (to form H3K9ac, H3K14ac, H3K18ac and H3K23ac) and H2B and deubiquitinates histone H2B. SAGA interacts with DNA via upstream activating sequences (UASs). This is SAGA complex/transcription factor TFIID complex subunit Taf12 from Schizosaccharomyces pombe (strain 972 / ATCC 24843) (Fission yeast).